A 131-amino-acid polypeptide reads, in one-letter code: Small ribosomal subunit protein uS9 (131 aa).

It belongs to the universal ribosomal protein uS9 family.

In Mesoplasma florum (strain ATCC 33453 / NBRC 100688 / NCTC 11704 / L1) (Acholeplasma florum), this protein is Small ribosomal subunit protein uS9.